Consider the following 249-residue polypeptide: Benzil reductase ((S)-benzoin forming) (249 aa).

Positions 6, 87, 154, 158, 189, and 191 each coordinate NADP(+). Tyr-154 acts as the Proton acceptor in catalysis.

This sequence belongs to the short-chain dehydrogenases/reductases (SDR) family.

It localises to the cytoplasm. It catalyses the reaction (S)-benzoin + NADP(+) = benzil + NADPH + H(+). It carries out the reaction 2-hydroxy-1-phenyl-1-propanone + NADP(+) = 1-phenyl-1,2-propanedione + NADPH + H(+). Its activity is regulated as follows. Inhibited by Cibacron blue 3GA, a general SDR family inhibitor. In terms of biological role, reduces benzil stereospecifically to (S)-benzoin. Can also reduce 1-phenyl-1,2-propanedione, 1,4-naphthoquinone, 1-(4-methyl-phenyl)-2-phenyl-ethane-1,2-dione, 1-(4-fluoro-phenyl)-2-phenyl-ethane-1,2-dione, methyl benzoylformate and p-nitrobenzaldehyde in decreasing order. The sequence is that of Benzil reductase ((S)-benzoin forming) from Bacillus cereus.